The sequence spans 260 residues: Malonyl-[acyl-carrier protein] O-methyltransferase (260 aa).

This sequence belongs to the methyltransferase superfamily.

The enzyme catalyses malonyl-[ACP] + S-adenosyl-L-methionine = malonyl-[ACP] methyl ester + S-adenosyl-L-homocysteine. It functions in the pathway cofactor biosynthesis; biotin biosynthesis. Its function is as follows. Converts the free carboxyl group of a malonyl-thioester to its methyl ester by transfer of a methyl group from S-adenosyl-L-methionine (SAM). It allows to synthesize pimeloyl-ACP via the fatty acid synthetic pathway. This Haemophilus influenzae (strain ATCC 51907 / DSM 11121 / KW20 / Rd) protein is Malonyl-[acyl-carrier protein] O-methyltransferase.